The chain runs to 66 residues: UPF0434 protein Jann_0424 (66 aa).

Belongs to the UPF0434 family.

In Jannaschia sp. (strain CCS1), this protein is UPF0434 protein Jann_0424.